Consider the following 234-residue polypeptide: Kappa-casein (234 aa).

Positions 1 to 21 (MMKSFLLVVNIVALTLPFLAA) are cleaved as a signal peptide. 3 tandem repeats follow at residues 127–153 (LGKA…QPTV), 154–179 (SAGD…EEAR), and 180–207 (ESPE…PRES). Residues 127-207 (LGKATILSTD…AVPSEEPRES (81 aa)) are 3 X 27 AA tandem repeats. A disordered region spans residues 143–234 (QTPVSAAQPT…STGPAIASMA (92 aa)). Residue threonine 144 is glycosylated (O-linked (GalNAc...) threonine). Polar residues predominate over residues 144–171 (TPVSAAQPTVSAGDTPEVSSQFIDTPDT). Residue threonine 158 is modified to Phosphothreonine. A Phosphoserine; alternate modification is found at serine 162. The O-linked (GalNAc...) serine; alternate glycan is linked to serine 162.

It belongs to the kappa-casein family. In terms of tissue distribution, mammary gland specific. Secreted in milk.

The protein localises to the secreted. Kappa-casein stabilizes micelle formation, preventing casein precipitation in milk. This is Kappa-casein (CSN3) from Cavia porcellus (Guinea pig).